The primary structure comprises 207 residues: Frataxin, mitochondrial (207 aa).

The transit peptide at 1–40 (MWAFGGRAAVGLLPRTASRASAWVGNPRWREPIVTCGRRG) directs the protein to the mitochondrion.

This sequence belongs to the frataxin family. Component of the mitochondrial core iron-sulfur cluster (ISC) complex composed of NFS1, LYRM4, NDUFAB1, ISCU, FXN, and FDX2; this complex is a heterohexamer containing two copies of each monomer. Homodimer. Monomer (probable predominant form). Oligomer. Monomers and polymeric aggregates of &gt;1 MDa have been isolated from mitochondria. A small fraction of heterologous overexpressed recombinant frataxin forms high-molecular weight aggregates that incorporate iron. Interacts with LYRM4. Interacts (via ferrous form) with ISCU; the interaction is possible when both are bound to the dimeric form of the cysteine desulfurase complex (NFS1:LYRM4) and the interaction enhances FXN interaction to the dimeric form of the cysteine desulfurase complex (NFS1:LYRM4). Interacts with FECH; one iron-bound FXN monomer seems to interact with a FECH homodimer. Interacts with SDHA and SDHB. Interacts with ACO2; the interaction is dependent on citrate. Interacts with HSPA9. Component of a complex composed of FXN, NFS1, LYRM4 and ISCU. In terms of assembly, interacts with ACO1. Interacts with ISCU (cytoplasmic form). In terms of processing, processed in two steps by mitochondrial processing peptidase (MPP). MPP first cleaves the precursor to intermediate form and subsequently converts the intermediate to yield frataxin mature form (frataxin(81-210)) which is the predominant form. The additional forms, frataxin(56-210) and frataxin(78-210), seem to be produced when the normal maturation process is impaired; their physiological relevance is unsure. In terms of tissue distribution, heart, liver, skeletal muscle, kidney, spleen and thymus. Weakly expressed in the brain and lung.

It is found in the mitochondrion. The protein resides in the cytoplasm. The protein localises to the cytosol. It carries out the reaction 4 Fe(2+) + O2 + 4 H(+) = 4 Fe(3+) + 2 H2O. Its function is as follows. Functions as an activator of persulfide transfer to the scaffoding protein ISCU as component of the core iron-sulfur cluster (ISC) assembly complex and participates to the [2Fe-2S] cluster assembly. Accelerates sulfur transfer from NFS1 persulfide intermediate to ISCU and to small thiols such as L-cysteine and glutathione leading to persulfuration of these thiols and ultimately sulfide release. Binds ferrous ion and is released from FXN upon the addition of both L-cysteine and reduced FDX2 during [2Fe-2S] cluster assembly. The core iron-sulfur cluster (ISC) assembly complex is involved in the de novo synthesis of a [2Fe-2S] cluster, the first step of the mitochondrial iron-sulfur protein biogenesis. This process is initiated by the cysteine desulfurase complex (NFS1:LYRM4:NDUFAB1) that produces persulfide which is delivered on the scaffold protein ISCU in a FXN-dependent manner. Then this complex is stabilized by FDX2 which provides reducing equivalents to accomplish the [2Fe-2S] cluster assembly. Finally, the [2Fe-2S] cluster is transferred from ISCU to chaperone proteins, including HSCB, HSPA9 and GLRX5. May play a role in the protection against iron-catalyzed oxidative stress through its ability to catalyze the oxidation of Fe(2+) to Fe(3+); the oligomeric form but not the monomeric form has in vitro ferroxidase activity. May be able to store large amounts of iron in the form of a ferrihydrite mineral by oligomerization; however, the physiological relevance is unsure as reports are conflicting and the function has only been shown using heterologous overexpression systems. May function as an iron chaperone protein that protects the aconitase [4Fe-4S]2+ cluster from disassembly and promotes enzyme reactivation. May play a role as a high affinity iron binding partner for FECH that is capable of both delivering iron to ferrochelatase and mediating the terminal step in mitochondrial heme biosynthesis. Modulates the RNA-binding activity of ACO1. May be involved in the cytoplasmic iron-sulfur protein biogenesis. May contribute to oxidative stress resistance and overall cell survival. In Mus musculus (Mouse), this protein is Frataxin, mitochondrial.